We begin with the raw amino-acid sequence, 212 residues long: Octanoyltransferase (212 aa).

The region spanning 31–209 (AETQDEIWLV…HFADLLGYNI (179 aa)) is the BPL/LPL catalytic domain. Residues 70–77 (RGGQITYH), 138–140 (SLG), and 151–153 (GLA) each bind substrate. The active-site Acyl-thioester intermediate is cysteine 169.

The protein belongs to the LipB family.

The protein resides in the cytoplasm. It carries out the reaction octanoyl-[ACP] + L-lysyl-[protein] = N(6)-octanoyl-L-lysyl-[protein] + holo-[ACP] + H(+). Its pathway is protein modification; protein lipoylation via endogenous pathway; protein N(6)-(lipoyl)lysine from octanoyl-[acyl-carrier-protein]: step 1/2. Catalyzes the transfer of endogenously produced octanoic acid from octanoyl-acyl-carrier-protein onto the lipoyl domains of lipoate-dependent enzymes. Lipoyl-ACP can also act as a substrate although octanoyl-ACP is likely to be the physiological substrate. The sequence is that of Octanoyltransferase from Haemophilus influenzae (strain PittEE).